Here is a 271-residue protein sequence, read N- to C-terminus: Putative hydro-lyase blr2921 (271 aa).

It belongs to the D-glutamate cyclase family.

The chain is Putative hydro-lyase blr2921 from Bradyrhizobium diazoefficiens (strain JCM 10833 / BCRC 13528 / IAM 13628 / NBRC 14792 / USDA 110).